The sequence spans 101 residues: Urease subunit beta (101 aa).

It belongs to the urease beta subunit family. Heterotrimer of UreA (gamma), UreB (beta) and UreC (alpha) subunits. Three heterotrimers associate to form the active enzyme.

It is found in the cytoplasm. The catalysed reaction is urea + 2 H2O + H(+) = hydrogencarbonate + 2 NH4(+). It functions in the pathway nitrogen metabolism; urea degradation; CO(2) and NH(3) from urea (urease route): step 1/1. The sequence is that of Urease subunit beta from Burkholderia orbicola (strain MC0-3).